The primary structure comprises 324 residues: Beta-ketoacyl-[acyl-carrier-protein] synthase III (324 aa).

Residues Cys112 and His251 contribute to the active site. The ACP-binding stretch occupies residues 252–256; it reads QANLR. The active site involves Asn281.

It belongs to the thiolase-like superfamily. FabH family. In terms of assembly, homodimer.

It localises to the cytoplasm. The enzyme catalyses malonyl-[ACP] + acetyl-CoA + H(+) = 3-oxobutanoyl-[ACP] + CO2 + CoA. The protein operates within lipid metabolism; fatty acid biosynthesis. Functionally, catalyzes the condensation reaction of fatty acid synthesis by the addition to an acyl acceptor of two carbons from malonyl-ACP. Catalyzes the first condensation reaction which initiates fatty acid synthesis and may therefore play a role in governing the total rate of fatty acid production. Possesses both acetoacetyl-ACP synthase and acetyl transacylase activities. Its substrate specificity determines the biosynthesis of branched-chain and/or straight-chain of fatty acids. In Clostridium perfringens (strain 13 / Type A), this protein is Beta-ketoacyl-[acyl-carrier-protein] synthase III.